The following is a 525-amino-acid chain: Averantin hydroxylase (525 aa).

The helical transmembrane segment at 36 to 56 (VLATFVAGIGALLLWTLTTVF) threads the bilayer. An N-linked (GlcNAc...) asparagine glycan is attached at asparagine 315. Heme is bound at residue cysteine 462.

Belongs to the cytochrome P450 family. The cofactor is heme.

It is found in the membrane. It carries out the reaction (1'S)-averantin + reduced [NADPH--hemoprotein reductase] + O2 = (1'S,5'R)-5'-hydroxyaverantin + oxidized [NADPH--hemoprotein reductase] + H2O. It catalyses the reaction (1'S)-averantin + reduced [NADPH--hemoprotein reductase] + O2 = (1'S,5'S)-5'-hydroxyaverantin + oxidized [NADPH--hemoprotein reductase] + H2O + H(+). It participates in mycotoxin biosynthesis. Functionally, averantin hydroxylase; part of the fragmented gene cluster that mediates the biosynthesis of dothistromin (DOTH), a polyketide toxin very similar in structure to the aflatoxin precursor, versicolorin B. The first step of the pathway is the conversion of acetate to norsolorinic acid (NOR) and requires the fatty acid synthase subunits hexA and hexB, as well as the polyketide synthase pksA. PksA combines a hexanoyl starter unit and 7 malonyl-CoA extender units to synthesize the precursor NOR. The hexanoyl starter unit is provided to the acyl-carrier protein (ACP) domain by the fungal fatty acid synthase hexA/hexB. The second step is the conversion of NOR to averantin (AVN) and requires the norsolorinic acid ketoreductase nor1, which catalyzes the dehydration of norsolorinic acid to form (1'S)-averantin. The cytochrome P450 monooxygenase avnA then catalyzes the hydroxylation of AVN to 5'hydroxyaverantin (HAVN). The next step is performed by adhA that transforms HAVN to averufin (AVF). Averufin might then be converted to hydroxyversicolorone by cypX and avfA. Hydroxyversicolorone is further converted versiconal hemiacetal acetate (VHA) by moxY. VHA is then the substrate for the versiconal hemiacetal acetate esterase est1 to yield versiconal (VAL). Versicolorin B synthase vbsA then converts VAL to versicolorin B (VERB) by closing the bisfuran ring. Then, the activity of the versicolorin B desaturase verB leads to versicolorin A (VERA). DotB, a predicted chloroperoxidase, may perform epoxidation of the A-ring of VERA. Alternatively, a cytochrome P450, such as cypX or avnA could catalyze this step. It is also possible that another, uncharacterized, cytochrome P450 enzyme is responsible for this step. Opening of the epoxide could potentially be achieved by the epoxide hydrolase epoA. However, epoA seems not to be required for DOTH biosynthesis, but other epoxide hydrolases may have the ability to complement this hydrolysis. Alternatively, opening of the epoxide ring could be achieved non-enzymatically. The next step is the deoxygenation of ring A to yield the 5,8-dihydroxyanthraquinone which is most likely catalyzed by the NADPH dehydrogenase encoded by ver1. The last stages of DOTH biosynthesis are proposed to involve hydroxylation of the bisfuran. OrdB and norB might have oxidative roles here. An alternative possibility is that cytochrome P450 monoogenases such as avnA and cypX might perform these steps in addition to previously proposed steps. The protein is Averantin hydroxylase of Dothistroma septosporum (strain NZE10 / CBS 128990) (Red band needle blight fungus).